The sequence spans 419 residues: MHHLRALVGVGLAGLAAGVPLTDKISVKPRQAPGAQNVVYWGQNGGGTIENNDLAAYCQPNSGIDVLVLAFLYQFGNGGNIPSGTIGQSCYISTSGQGQNCEALTAAIHTCQSAGVKIILSLGGATSSYSLQTQAQAEQIGQYLWDSYGNSGNKTVQRPFGSNFVNGFDFDIEVNGGSSQYYQYMIAKLRSNFASDKSNTYLITGAPQCPIPEPNMGVIISNSVFDHLYVQFYNNNNYTVPCALGINGNAPFNYNNWTSFIADTPSAGAKIFIGVPASPLASTGTPSGAQYYAAPDQLAAIVGEYRSDAHFGGIMMWSAGFSDANVNNGCTYAQQAKSILVNGAPCASSGPPSSTPATAPAPTATTMPSSTSVSSPAASPTGGTVPQWGQCGGEGYSGPTQCVAPYQCVKQGDWWSSCR.

The N-terminal stretch at 1–18 (MHHLRALVGVGLAGLAAG) is a signal peptide. Residues 35-343 (AQNVVYWGQN…QQAKSILVNG (309 aa)) enclose the GH18 domain. A glycan (N-linked (GlcNAc...) asparagine) is linked at Asn-153. Glu-173 acts as the Proton donor in catalysis. Residues Asn-237 and Asn-256 are each glycosylated (N-linked (GlcNAc...) asparagine). A compositionally biased stretch (low complexity) spans 350 to 381 (GPPSSTPATAPAPTATTMPSSTSVSSPAASPT). The segment at 350 to 386 (GPPSSTPATAPAPTATTMPSSTSVSSPAASPTGGTVP) is disordered. In terms of domain architecture, CBM1 spans 383–419 (GTVPQWGQCGGEGYSGPTQCVAPYQCVKQGDWWSSCR).

This sequence belongs to the glycosyl hydrolase 18 family. Chitinase class III subfamily.

The protein resides in the secreted. It carries out the reaction Random endo-hydrolysis of N-acetyl-beta-D-glucosaminide (1-&gt;4)-beta-linkages in chitin and chitodextrins.. Its function is as follows. Secreted chitinase involved in the degradation of chitin, a component of the cell walls of fungi and exoskeletal elements of some animals (including worms and arthropods). Participates in the infection process and directly acts in the penetration process of the host cuticle. The protein is Endochitinase 2 (chi2) of Metarhizium robertsii (strain ARSEF 23 / ATCC MYA-3075) (Metarhizium anisopliae (strain ARSEF 23)).